A 266-amino-acid chain; its full sequence is uncharacterized protein (266 aa).

This sequence belongs to the chlamydial CPn_0087/CT3_09/TC_0583 family.

This is an uncharacterized protein from Chlamydia muridarum (strain MoPn / Nigg).